Here is a 413-residue protein sequence, read N- to C-terminus: MQRDKLREVRGTKDLLGIELYKFQYIHRLSQSIAHRYGFIAVDTPIIEFTEVFTKTLGDDSDIVMKEMYNFQDKSGENITLRPEFTSAIVRVLINKNLIIPVKLFSSGPVFRYERPQKCRQRQFHQVNFEFFGSDLPLADIEMIALGYHILDELKLLDDITLEINFLGDKETMNSYKLSLIEYLNKYKKDLSEDSQRRLITNPLRILDSKAPEDREILLNVPNISYFYSKSSNDFFAEVLYGLDELCIPYKVNHSIVRGLDYYCNTVFEFTTSKLGAQNAVVAGGRYDGLVKSMGGNDTPAVGFAMGVERVSALIDYKHQEPRSVVLIPIGKDAVSYALKLAYELRCNGISVNWNYKNANLRNALRKVGDDNIVLIFGDEELKNNTIQVKDMKTGEQQEIVRCDLLDTLCNKI.

It belongs to the class-II aminoacyl-tRNA synthetase family. As to quaternary structure, homodimer.

It is found in the cytoplasm. It catalyses the reaction tRNA(His) + L-histidine + ATP = L-histidyl-tRNA(His) + AMP + diphosphate + H(+). In Ehrlichia chaffeensis (strain ATCC CRL-10679 / Arkansas), this protein is Histidine--tRNA ligase.